Reading from the N-terminus, the 461-residue chain is Argininosuccinate lyase (461 aa).

This sequence belongs to the lyase 1 family. Argininosuccinate lyase subfamily.

Its subcellular location is the cytoplasm. The enzyme catalyses 2-(N(omega)-L-arginino)succinate = fumarate + L-arginine. It participates in amino-acid biosynthesis; L-arginine biosynthesis; L-arginine from L-ornithine and carbamoyl phosphate: step 3/3. This is Argininosuccinate lyase from Streptococcus thermophilus (strain CNRZ 1066).